The primary structure comprises 333 residues: Ferredoxin--NADP reductase (333 aa).

FAD is bound by residues D32, Q40, Y45, A85, F119, D285, and T326.

It belongs to the ferredoxin--NADP reductase type 2 family. In terms of assembly, homodimer. Requires FAD as cofactor.

It carries out the reaction 2 reduced [2Fe-2S]-[ferredoxin] + NADP(+) + H(+) = 2 oxidized [2Fe-2S]-[ferredoxin] + NADPH. The polypeptide is Ferredoxin--NADP reductase (Neorickettsia sennetsu (strain ATCC VR-367 / Miyayama) (Ehrlichia sennetsu)).